The chain runs to 237 residues: NADH-ubiquinone oxidoreductase assembly factor N7BML (237 aa).

Basic and acidic residues predominate over residues 214 to 223; that stretch reads VEKERDDSGK. A disordered region spans residues 214 to 237; sequence VEKERDDSGKPAEWTPKAAVRRRG.

Belongs to the complex I NDUFA12 subunit family.

The protein localises to the mitochondrion. Acts as an assembly factor of mitochondrial complex I. The polypeptide is NADH-ubiquinone oxidoreductase assembly factor N7BML (Yarrowia lipolytica (strain CLIB 122 / E 150) (Yeast)).